Reading from the N-terminus, the 169-residue chain is Small ribosomal subunit protein uS5c (169 aa).

Positions W17–I80 constitute an S5 DRBM domain.

Belongs to the universal ribosomal protein uS5 family. As to quaternary structure, part of the 30S ribosomal subunit. Contacts protein S4.

The protein localises to the plastid. Its subcellular location is the chloroplast. In terms of biological role, with S4 and S12 plays an important role in translational accuracy. In Guillardia theta (Cryptophyte), this protein is Small ribosomal subunit protein uS5c (rps5).